Reading from the N-terminus, the 227-residue chain is Esterase Rv3036c (227 aa).

Residues Y3–A23 traverse the membrane as a helical segment.

Belongs to the RsiV family.

It localises to the cell membrane. The protein resides in the secreted. It is found in the cell wall. The catalysed reaction is a fatty acid ester + H2O = an aliphatic alcohol + a fatty acid + H(+). The enzyme catalyses an acetyl ester + H2O = an aliphatic alcohol + acetate + H(+). It catalyses the reaction a butanoate ester + H2O = an aliphatic alcohol + butanoate + H(+). It carries out the reaction a hexanoate ester + H2O = an aliphatic alcohol + hexanoate + H(+). The catalysed reaction is a dodecanoate ester + H2O = an aliphatic alcohol + dodecanoate + H(+). The enzyme catalyses a tetradecanoate ester + H2O = an aliphatic alcohol + tetradecanoate + H(+). It catalyses the reaction an octanoate ester + H2O = an aliphatic alcohol + octanoate + H(+). Hydrolyzes ester substrates carbon chain lengths ranging from C2 to C14. In vitro, acetate (C2), butyrate (C4) and caprylate (C6) are hydrolyzed with high efficiency. Has lower activity against laurate (C12), myristate (C14) and caproate (C8), and weak activity against palmitate (C16). This Mycobacterium tuberculosis (strain ATCC 25618 / H37Rv) protein is Esterase Rv3036c.